Reading from the N-terminus, the 160-residue chain is 6,7-dimethyl-8-ribityllumazine synthase (160 aa).

5-amino-6-(D-ribitylamino)uracil is bound by residues Phe-28, 62–64 (ALE), and 86–88 (AVI). 91–92 (ET) is a binding site for (2S)-2-hydroxy-3-oxobutyl phosphate. The Proton donor role is filled by His-94. Asn-119 is a binding site for 5-amino-6-(D-ribitylamino)uracil. Arg-133 provides a ligand contact to (2S)-2-hydroxy-3-oxobutyl phosphate.

Belongs to the DMRL synthase family.

The catalysed reaction is (2S)-2-hydroxy-3-oxobutyl phosphate + 5-amino-6-(D-ribitylamino)uracil = 6,7-dimethyl-8-(1-D-ribityl)lumazine + phosphate + 2 H2O + H(+). The protein operates within cofactor biosynthesis; riboflavin biosynthesis; riboflavin from 2-hydroxy-3-oxobutyl phosphate and 5-amino-6-(D-ribitylamino)uracil: step 1/2. Functionally, catalyzes the formation of 6,7-dimethyl-8-ribityllumazine by condensation of 5-amino-6-(D-ribitylamino)uracil with 3,4-dihydroxy-2-butanone 4-phosphate. This is the penultimate step in the biosynthesis of riboflavin. The polypeptide is 6,7-dimethyl-8-ribityllumazine synthase (Nitrosospira multiformis (strain ATCC 25196 / NCIMB 11849 / C 71)).